We begin with the raw amino-acid sequence, 465 residues long: Protein hedgehog (465 aa).

C79 is lipidated: N-palmitoyl cysteine. Residues E143, E144, D149, T179, E180, D183, and D185 each coordinate Ca(2+). G251 is lipidated: Cholesterol glycine ester.

This sequence belongs to the hedgehog family. In terms of assembly, interacts with shf. Post-translationally, the C-terminal part of the hedgehog protein precursor displays an autoproteolysis activity that results in the cleavage of the full-length protein into two parts (N-product and C-product). In addition, the C-terminal part displays a cholesterol transferase activity that results by the covalent attachment of a cholesterol moiety to the C-terminal of the newly generated N-product. The N-product is the active species in both local and long-range signaling, whereas the C-product has no signaling activity. Cholesterylation is required for N-product targeting to lipid rafts and multimerization. In terms of processing, N-palmitoylation by Rasp of the hedgehog N-product, within the secretory pathway, is required for the embryonic and larval patterning activities of the hedgehog signal.

Its subcellular location is the nucleus. It localises to the cytoplasm. It is found in the cell membrane. The catalysed reaction is glycyl-L-cysteinyl-[protein] + cholesterol + H(+) = [protein]-C-terminal glycyl cholesterol ester + N-terminal L-cysteinyl-[protein]. The C-terminal part of the hedgehog protein precursor displays an autoproteolysis activity that results in the cleavage of the full-length protein into two parts (N-product and C-product). In addition, the C-terminal part displays a cholesterol transferase activity that results by the covalent attachment of a cholesterol moiety to the C-terminal of the newly generated N-product. Once cleaved, the C-product has no signaling activity and diffuses from the cell. Its function is as follows. The dually lipidated hedgehog protein N-product is a morphogen which is essential for a variety of patterning events during development. Establishes the anterior-posterior axis of the embryonic segments and patterns the larval imaginal disks. Binds to the patched (ptc) receptor, which functions in association with smoothened (smo), to activate the transcription of target genes wingless (wg), decapentaplegic (dpp) and ptc. In the absence of hh, ptc represses the constitutive signaling activity of smo through fused (fu). Essential component of a signaling pathway which regulates the Duox-dependent gut immune response to bacterial uracil; required to activate Cad99C-dependent endosome formation, norpA-dependent Ca2+ mobilization and p38 MAPK, which are essential steps in the Duox-dependent production of reactive oxygen species (ROS) in response to intestinal bacterial infection. During photoreceptor differentiation, it up-regulates transcription of Ubr3, which in turn promotes the hh-signaling pathway by mediating the ubiquitination and degradation of cos. This chain is Protein hedgehog, found in Drosophila sechellia (Fruit fly).